A 92-amino-acid polypeptide reads, in one-letter code: Indole-3-acetic acid-induced protein ARG7 (92 aa).

This sequence belongs to the ARG7 family.

In Vigna radiata var. radiata (Mung bean), this protein is Indole-3-acetic acid-induced protein ARG7 (ARG7).